A 549-amino-acid polypeptide reads, in one-letter code: Glucose-6-phosphate isomerase (549 aa).

Glutamate 355 acts as the Proton donor in catalysis. Residues histidine 387 and lysine 515 contribute to the active site.

Belongs to the GPI family.

It localises to the cytoplasm. It catalyses the reaction alpha-D-glucose 6-phosphate = beta-D-fructose 6-phosphate. It functions in the pathway carbohydrate biosynthesis; gluconeogenesis. Its pathway is carbohydrate degradation; glycolysis; D-glyceraldehyde 3-phosphate and glycerone phosphate from D-glucose: step 2/4. Catalyzes the reversible isomerization of glucose-6-phosphate to fructose-6-phosphate. The polypeptide is Glucose-6-phosphate isomerase (Histophilus somni (strain 129Pt) (Haemophilus somnus)).